Here is a 342-residue protein sequence, read N- to C-terminus: Holliday junction branch migration complex subunit RuvB (342 aa).

Residues 1–184 (MEEDFNIRDH…FGINLHLEYY (184 aa)) form a large ATPase domain (RuvB-L) region. Residues Leu-23, Arg-24, Gly-65, Lys-68, Thr-69, Thr-70, 131–133 (EDY), Arg-174, Tyr-184, and Arg-221 each bind ATP. Thr-69 is a binding site for Mg(2+). Residues 185 to 255 (DDDILSNIIS…IANYALEALN (71 aa)) are small ATPAse domain (RuvB-S). Positions 258 to 342 (KYGLDEIDNK…YNSQKTLFND (85 aa)) are head domain (RuvB-H). Positions 313 and 318 each coordinate DNA.

It belongs to the RuvB family. Homohexamer. Forms an RuvA(8)-RuvB(12)-Holliday junction (HJ) complex. HJ DNA is sandwiched between 2 RuvA tetramers; dsDNA enters through RuvA and exits via RuvB. An RuvB hexamer assembles on each DNA strand where it exits the tetramer. Each RuvB hexamer is contacted by two RuvA subunits (via domain III) on 2 adjacent RuvB subunits; this complex drives branch migration. In the full resolvosome a probable DNA-RuvA(4)-RuvB(12)-RuvC(2) complex forms which resolves the HJ.

The protein resides in the cytoplasm. The enzyme catalyses ATP + H2O = ADP + phosphate + H(+). Functionally, the RuvA-RuvB-RuvC complex processes Holliday junction (HJ) DNA during genetic recombination and DNA repair, while the RuvA-RuvB complex plays an important role in the rescue of blocked DNA replication forks via replication fork reversal (RFR). RuvA specifically binds to HJ cruciform DNA, conferring on it an open structure. The RuvB hexamer acts as an ATP-dependent pump, pulling dsDNA into and through the RuvAB complex. RuvB forms 2 homohexamers on either side of HJ DNA bound by 1 or 2 RuvA tetramers; 4 subunits per hexamer contact DNA at a time. Coordinated motions by a converter formed by DNA-disengaged RuvB subunits stimulates ATP hydrolysis and nucleotide exchange. Immobilization of the converter enables RuvB to convert the ATP-contained energy into a lever motion, pulling 2 nucleotides of DNA out of the RuvA tetramer per ATP hydrolyzed, thus driving DNA branch migration. The RuvB motors rotate together with the DNA substrate, which together with the progressing nucleotide cycle form the mechanistic basis for DNA recombination by continuous HJ branch migration. Branch migration allows RuvC to scan DNA until it finds its consensus sequence, where it cleaves and resolves cruciform DNA. The sequence is that of Holliday junction branch migration complex subunit RuvB from Bacteroides fragilis (strain ATCC 25285 / DSM 2151 / CCUG 4856 / JCM 11019 / LMG 10263 / NCTC 9343 / Onslow / VPI 2553 / EN-2).